The chain runs to 342 residues: Anthranilate phosphoribosyltransferase (342 aa).

5-phospho-alpha-D-ribose 1-diphosphate contacts are provided by residues Gly81, 84-85 (GD), Thr89, 91-94 (NIST), 109-117 (KHGNRALSS), and Thr121. Residue Gly81 coordinates anthranilate. Ser93 contacts Mg(2+). Asn112 serves as a coordination point for anthranilate. Arg167 contacts anthranilate. Mg(2+) contacts are provided by Asp225 and Glu226.

This sequence belongs to the anthranilate phosphoribosyltransferase family. Homodimer. The cofactor is Mg(2+).

The catalysed reaction is N-(5-phospho-beta-D-ribosyl)anthranilate + diphosphate = 5-phospho-alpha-D-ribose 1-diphosphate + anthranilate. Its pathway is amino-acid biosynthesis; L-tryptophan biosynthesis; L-tryptophan from chorismate: step 2/5. Its function is as follows. Catalyzes the transfer of the phosphoribosyl group of 5-phosphorylribose-1-pyrophosphate (PRPP) to anthranilate to yield N-(5'-phosphoribosyl)-anthranilate (PRA). The chain is Anthranilate phosphoribosyltransferase from Agrobacterium fabrum (strain C58 / ATCC 33970) (Agrobacterium tumefaciens (strain C58)).